The chain runs to 103 residues: Co-chaperonin GroES (103 aa).

The protein belongs to the GroES chaperonin family. In terms of assembly, heptamer of 7 subunits arranged in a ring. Interacts with the chaperonin GroEL.

It localises to the cytoplasm. Its function is as follows. Together with the chaperonin GroEL, plays an essential role in assisting protein folding. The GroEL-GroES system forms a nano-cage that allows encapsulation of the non-native substrate proteins and provides a physical environment optimized to promote and accelerate protein folding. GroES binds to the apical surface of the GroEL ring, thereby capping the opening of the GroEL channel. The sequence is that of Co-chaperonin GroES from Microcystis aeruginosa (strain NIES-843 / IAM M-2473).